The sequence spans 354 residues: Neutral protease 2 homolog BCIN_12g06300 (354 aa).

The first 19 residues, 1-19 (MRSFSKILAVASLAAIANS), serve as a signal peptide directing secretion. Positions 20–179 (AVLKRDNNVL…PSSIDRRTVL (160 aa)) are excised as a propeptide. Disulfide bonds link C183–C255 and C262–C280. Residue H305 coordinates Zn(2+). E306 is a catalytic residue. H309 and D320 together coordinate Zn(2+).

This sequence belongs to the peptidase M35 family. The cofactor is Zn(2+).

It localises to the secreted. The catalysed reaction is Preferential cleavage of bonds with hydrophobic residues in P1'. Also 3-Asn-|-Gln-4 and 8-Gly-|-Ser-9 bonds in insulin B chain.. Its function is as follows. Secreted metalloproteinase that allows assimilation of proteinaceous substrates. Shows high activities on basic nuclear substrates such as histone and protamine. The protein is Neutral protease 2 homolog BCIN_12g06300 of Botryotinia fuckeliana (strain B05.10) (Noble rot fungus).